The following is a 100-amino-acid chain: NAD(P)H-quinone oxidoreductase subunit 4L, chloroplastic (100 aa).

Helical transmembrane passes span 1-21 (MLEN…YGLT), 30-50 (LMCL…FSSF), and 60-80 (VFAI…LAII).

This sequence belongs to the complex I subunit 4L family. As to quaternary structure, NDH is composed of at least 16 different subunits, 5 of which are encoded in the nucleus.

The protein resides in the plastid. The protein localises to the chloroplast thylakoid membrane. It carries out the reaction a plastoquinone + NADH + (n+1) H(+)(in) = a plastoquinol + NAD(+) + n H(+)(out). The catalysed reaction is a plastoquinone + NADPH + (n+1) H(+)(in) = a plastoquinol + NADP(+) + n H(+)(out). Functionally, NDH shuttles electrons from NAD(P)H:plastoquinone, via FMN and iron-sulfur (Fe-S) centers, to quinones in the photosynthetic chain and possibly in a chloroplast respiratory chain. The immediate electron acceptor for the enzyme in this species is believed to be plastoquinone. Couples the redox reaction to proton translocation, and thus conserves the redox energy in a proton gradient. This is NAD(P)H-quinone oxidoreductase subunit 4L, chloroplastic from Staurastrum punctulatum (Green alga).